A 152-amino-acid chain; its full sequence is Large ribosomal subunit protein bL9 (152 aa).

It belongs to the bacterial ribosomal protein bL9 family.

In terms of biological role, binds to the 23S rRNA. The protein is Large ribosomal subunit protein bL9 of Mycoplasmopsis synoviae (strain 53) (Mycoplasma synoviae).